A 170-amino-acid chain; its full sequence is Extracellular globin-3 (170 aa).

An N-terminal signal peptide occupies residues 1-17; sequence MLRQLLVLVGLAVVCLA. The Globin domain occupies 23-169; sequence CCSEEDHRIV…ILTKISSRLN (147 aa). A disulfide bridge connects residues Cys-24 and Cys-156. His-119 provides a ligand contact to heme b.

It belongs to the globin family. As to quaternary structure, the extracellular hemoglobin of the earthworm consists of 12 subunits that have a hexagonal bilayer structure with a molecular weight near 3.8 million. Each one-twelfth subunit is composed primarily of disulfide linked trimers (chains A, B, and C) and monomers (chain D).

The protein resides in the secreted. This Lumbricus terrestris (Common earthworm) protein is Extracellular globin-3.